Here is a 630-residue protein sequence, read N- to C-terminus: Chaperone protein DnaK (630 aa).

Thr198 carries the post-translational modification Phosphothreonine; by autocatalysis. The segment at 604–630 is disordered; that stretch reads AAAAPGEEAPKDDDVVDAEFSEVDDKK. Residues 617-630 show a composition bias toward acidic residues; sequence DVVDAEFSEVDDKK.

The protein belongs to the heat shock protein 70 family.

In terms of biological role, acts as a chaperone. This chain is Chaperone protein DnaK, found in Rhizorhabdus wittichii (strain DSM 6014 / CCUG 31198 / JCM 15750 / NBRC 105917 / EY 4224 / RW1) (Sphingomonas wittichii).